Consider the following 127-residue polypeptide: Aspartate 1-decarboxylase (127 aa).

The Schiff-base intermediate with substrate; via pyruvic acid role is filled by serine 25. Serine 25 bears the Pyruvic acid (Ser) mark. Threonine 57 is a binding site for substrate. Tyrosine 58 acts as the Proton donor in catalysis. 73 to 75 serves as a coordination point for substrate; the sequence is GAA.

It belongs to the PanD family. As to quaternary structure, heterooctamer of four alpha and four beta subunits. Pyruvate serves as cofactor. Post-translationally, is synthesized initially as an inactive proenzyme, which is activated by self-cleavage at a specific serine bond to produce a beta-subunit with a hydroxyl group at its C-terminus and an alpha-subunit with a pyruvoyl group at its N-terminus.

It localises to the cytoplasm. The enzyme catalyses L-aspartate + H(+) = beta-alanine + CO2. It participates in cofactor biosynthesis; (R)-pantothenate biosynthesis; beta-alanine from L-aspartate: step 1/1. Catalyzes the pyruvoyl-dependent decarboxylation of aspartate to produce beta-alanine. This is Aspartate 1-decarboxylase from Listeria monocytogenes serotype 4b (strain F2365).